The chain runs to 151 residues: Caveolin-3 (151 aa).

Residues methionine 1–proline 83 are Cytoplasmic-facing. Lysine 38 is covalently cross-linked (Glycyl lysine isopeptide (Lys-Gly) (interchain with G-Cter in SUMO3)). The interval threonine 64 to isoleucine 114 is required for interaction with DAG1. Positions leucine 84–valine 104 form an intramembrane region, helical. At proline 105–valine 151 the chain is on the cytoplasmic side.

Belongs to the caveolin family. Homooligomer. Interacts with DLG1 and KCNA5; forms a ternary complex. Interacts with TRIM72. Interacts with MUSK; may regulate MUSK signaling. Interacts with DAG1 (via its C-terminal); the interaction prevents binding of DAG1 with DMD. Interacts with DYSF. Interacts with POPDC1. Interacts with CAVIN1 and CAVIN2. Interacts with CAVIN4. Sumoylation with SUMO3 by PIAS4 may reduce agonist-induced internalization and desensitization of adrenergic receptor ABRD2. In terms of tissue distribution, expressed predominantly in muscle.

It localises to the golgi apparatus membrane. The protein resides in the cell membrane. The protein localises to the membrane. It is found in the caveola. Its subcellular location is the sarcolemma. Its function is as follows. May act as a scaffolding protein within caveolar membranes. Interacts directly with G-protein alpha subunits and can functionally regulate their activity. May also regulate voltage-gated potassium channels. Plays a role in the sarcolemma repair mechanism of both skeletal muscle and cardiomyocytes that permits rapid resealing of membranes disrupted by mechanical stress. Mediates the recruitment of CAVIN2 and CAVIN3 proteins to the caveolae. The protein is Caveolin-3 (CAV3) of Homo sapiens (Human).